A 440-amino-acid chain; its full sequence is MEQLARLYHDHLRVLNQRVCEILSRENLSGLVIHSGQPHRQFLDDLDYPFKVNPHFKAWLPVIDNPNSWLVVNGTDKPLLIFYRPVDFWHKVADEPNEFWAEHVDIKFLTKADKVAEYLPADIDEWAYIGEHLDVADVLGFARRNPDSVLSYLNYHRATKTEYELACMRKANEIAVTGHQAAKTAFYNGASEFEILQVYLSAISQGENQVPYSSIVALNENSAILHYTALEHTAPAQRRSFLIDAGANFNGYASDITRSYAFEKNIFDDLITAIDNMQLQIINLMQPGVSYAQLHVETHYKLAQILLDFDIVSGDVQGLVEQGITSVFFPHGLGHMLGIQVHDMGGFLGDDKGAHIAVPEAHPFLRCTRELDVNQVLTIEPGVYIIDSLLNELKQDKRQSQINWNTVEVLRPFGGIRIEDNVIVHRDRIENMTRNWGLNR.

5 residues coordinate Mn(2+): Asp244, Asp255, His335, Glu380, and Glu419.

Belongs to the peptidase M24B family. Bacterial-type prolidase subfamily. Mn(2+) is required as a cofactor.

The enzyme catalyses Xaa-L-Pro dipeptide + H2O = an L-alpha-amino acid + L-proline. Splits dipeptides with a prolyl residue in the C-terminal position. This chain is Xaa-Pro dipeptidase, found in Shewanella halifaxensis (strain HAW-EB4).